Reading from the N-terminus, the 224-residue chain is Octanoyltransferase (224 aa).

One can recognise a BPL/LPL catalytic domain in the interval 29–224 (EATPDALWIC…GQKLATYLAP (196 aa)). Substrate-binding positions include 68–75 (RGGQVTFH), 157–159 (ALG), and 170–172 (GVA). The active-site Acyl-thioester intermediate is the Cys188.

Belongs to the LipB family.

It is found in the cytoplasm. The enzyme catalyses octanoyl-[ACP] + L-lysyl-[protein] = N(6)-octanoyl-L-lysyl-[protein] + holo-[ACP] + H(+). It participates in protein modification; protein lipoylation via endogenous pathway; protein N(6)-(lipoyl)lysine from octanoyl-[acyl-carrier-protein]: step 1/2. Catalyzes the transfer of endogenously produced octanoic acid from octanoyl-acyl-carrier-protein onto the lipoyl domains of lipoate-dependent enzymes. Lipoyl-ACP can also act as a substrate although octanoyl-ACP is likely to be the physiological substrate. This is Octanoyltransferase from Polaromonas naphthalenivorans (strain CJ2).